The chain runs to 843 residues: DNA gyrase subunit A (843 aa).

A Topo IIA-type catalytic domain is found at 61 to 528; sequence LPDVRDGLKP…ESSTFNAEDL (468 aa). Catalysis depends on Tyr-149, which acts as the O-(5'-phospho-DNA)-tyrosine intermediate. The GyrA-box motif lies at 555–561; it reads QKRGGKG.

It belongs to the type II topoisomerase GyrA/ParC subunit family. Heterotetramer, composed of two GyrA and two GyrB chains. In the heterotetramer, GyrA contains the active site tyrosine that forms a transient covalent intermediate with DNA, while GyrB binds cofactors and catalyzes ATP hydrolysis.

The protein localises to the cytoplasm. The enzyme catalyses ATP-dependent breakage, passage and rejoining of double-stranded DNA.. In terms of biological role, a type II topoisomerase that negatively supercoils closed circular double-stranded (ds) DNA in an ATP-dependent manner to modulate DNA topology and maintain chromosomes in an underwound state. Negative supercoiling favors strand separation, and DNA replication, transcription, recombination and repair, all of which involve strand separation. Also able to catalyze the interconversion of other topological isomers of dsDNA rings, including catenanes and knotted rings. Type II topoisomerases break and join 2 DNA strands simultaneously in an ATP-dependent manner. This chain is DNA gyrase subunit A, found in Leptospira biflexa serovar Patoc (strain Patoc 1 / Ames).